Reading from the N-terminus, the 362-residue chain is MIDPFKRLARKGLFLFDPETAHGMSIAALKSGLVPACQLTPDPRLRQTVAGLTFENPLGMAAGYDKNAEVPEALLKLGFGFTEIGTVTPKPQSGNPRPRIFRLVEDEGVINRLGFNNEGHDAAFGRLAALRGGGMIGVNIGANKDSEDRIADYVAGIRRFYSVARYFTANISSPNTPGLRDLQGRESLAVLLSAVLAARDEMGAASGRKIPVFLKIAPDLTEEGMDDIAAEALSHALDGLIVSNTTLSRDGLKDQRQAKETGGLSGVPLFEKSTAVLARMRKRVGPDLPIIGVGGVSSAETALEKIRAGADLVQLYSCMVYEGPGLAGDVVRGLSKLLDREKAASIRELRDTRVDYWAARKV.

FMN-binding positions include Ala62–Lys66 and Thr86. Lys66 is a binding site for substrate. Asn111–Phe115 lines the substrate pocket. Positions 139 and 170 each coordinate FMN. Substrate is bound at residue Asn170. The active-site Nucleophile is the Ser173. Asn175 is a substrate binding site. Lys215 and Ser243 together coordinate FMN. Asn244–Thr245 lines the substrate pocket. FMN-binding positions include Gly266, Gly295, and Tyr316–Ser317.

The protein belongs to the dihydroorotate dehydrogenase family. Type 2 subfamily. As to quaternary structure, monomer. Requires FMN as cofactor.

The protein localises to the cell membrane. It carries out the reaction (S)-dihydroorotate + a quinone = orotate + a quinol. The protein operates within pyrimidine metabolism; UMP biosynthesis via de novo pathway; orotate from (S)-dihydroorotate (quinone route): step 1/1. Its function is as follows. Catalyzes the conversion of dihydroorotate to orotate with quinone as electron acceptor. The polypeptide is Dihydroorotate dehydrogenase (quinone) (Rhizobium johnstonii (strain DSM 114642 / LMG 32736 / 3841) (Rhizobium leguminosarum bv. viciae)).